A 467-amino-acid polypeptide reads, in one-letter code: ATP synthase subunit beta (467 aa).

152–159 (GGAGVGKT) lines the ATP pocket.

It belongs to the ATPase alpha/beta chains family. F-type ATPases have 2 components, CF(1) - the catalytic core - and CF(0) - the membrane proton channel. CF(1) has five subunits: alpha(3), beta(3), gamma(1), delta(1), epsilon(1). CF(0) has three main subunits: a(1), b(2) and c(9-12). The alpha and beta chains form an alternating ring which encloses part of the gamma chain. CF(1) is attached to CF(0) by a central stalk formed by the gamma and epsilon chains, while a peripheral stalk is formed by the delta and b chains.

It is found in the cell membrane. It carries out the reaction ATP + H2O + 4 H(+)(in) = ADP + phosphate + 5 H(+)(out). In terms of biological role, produces ATP from ADP in the presence of a proton gradient across the membrane. The catalytic sites are hosted primarily by the beta subunits. The protein is ATP synthase subunit beta of Caldicellulosiruptor bescii (strain ATCC BAA-1888 / DSM 6725 / KCTC 15123 / Z-1320) (Anaerocellum thermophilum).